A 785-amino-acid chain; its full sequence is Endonuclease MutS2 (785 aa).

Position 335-342 (335-342 (GPNTGGKT)) interacts with ATP. The Smr domain maps to 710 to 785 (LDLRGERYED…GNGVTIVEFK (76 aa)).

The protein belongs to the DNA mismatch repair MutS family. MutS2 subfamily. In terms of assembly, homodimer. Binds to stalled ribosomes, contacting rRNA.

In terms of biological role, endonuclease that is involved in the suppression of homologous recombination and thus may have a key role in the control of bacterial genetic diversity. Functionally, acts as a ribosome collision sensor, splitting the ribosome into its 2 subunits. Detects stalled/collided 70S ribosomes which it binds and splits by an ATP-hydrolysis driven conformational change. Acts upstream of the ribosome quality control system (RQC), a ribosome-associated complex that mediates the extraction of incompletely synthesized nascent chains from stalled ribosomes and their subsequent degradation. Probably generates substrates for RQC. The protein is Endonuclease MutS2 of Listeria innocua serovar 6a (strain ATCC BAA-680 / CLIP 11262).